Consider the following 234-residue polypeptide: Phosphoribosylaminoimidazole-succinocarboxamide synthase (234 aa).

Belongs to the SAICAR synthetase family.

It carries out the reaction 5-amino-1-(5-phospho-D-ribosyl)imidazole-4-carboxylate + L-aspartate + ATP = (2S)-2-[5-amino-1-(5-phospho-beta-D-ribosyl)imidazole-4-carboxamido]succinate + ADP + phosphate + 2 H(+). Its pathway is purine metabolism; IMP biosynthesis via de novo pathway; 5-amino-1-(5-phospho-D-ribosyl)imidazole-4-carboxamide from 5-amino-1-(5-phospho-D-ribosyl)imidazole-4-carboxylate: step 1/2. The chain is Phosphoribosylaminoimidazole-succinocarboxamide synthase from Pyrococcus furiosus (strain ATCC 43587 / DSM 3638 / JCM 8422 / Vc1).